Reading from the N-terminus, the 594-residue chain is MKNIRNFSIIAHIDHGKSTLSDRFIQVCNGLSEREMKEQVLDSMDIERERGITIKAQSVTLDYTARDGQTYQLNFIDTPGHVDFSYEVSRSLAACEGALLVVDAAQGVEAQTVANCYTAIEQNLEVIPILNKIDLPSAEPDRVAQEIEEIIGIDATGATTCSAKTGIGVEDVLETIVAKVPAPEGDVNAKLQALIIDSWFDNYLGVVSLVRVKNGTIKKGEKFKVMSTGVAYQVDRLGVFTPKMKDLDHLKAGEVGFIVAGIKDIHGAPVGDTLTHAHNPTDKPVPGFKKVQPQVYAGMFTISSDDYPDFREALEKLSLNDASLFFEPEVSQALGFGFRCGFLGMLHMEIIQERLEREYNLDLITSAPTVVYKAIKKDGEIIEVDNPSKLPEPGAIAEIQEPIVRANILVPKDYVGSVITICIEKRGVQVDLNYVGNQVSITYDLPMIEVVSDFFDTLKSVTKGYGSLDYELIRYEPANMVRLDVLINGDKVDALASIVHKDQAKYKGRELVERLKELIPRQMFEVAIQAAIGGTIVARSTVKALRKNVLAKCYGGDVSRKKKLLEKQKEGKKRMKNIGSVEIPQEAFLSVLKK.

Residues 2-184 enclose the tr-type G domain; the sequence is KNIRNFSIIA…TIVAKVPAPE (183 aa). GTP contacts are provided by residues 14–19 and 131–134; these read DHGKST and NKID.

This sequence belongs to the TRAFAC class translation factor GTPase superfamily. Classic translation factor GTPase family. LepA subfamily.

The protein localises to the cell inner membrane. It catalyses the reaction GTP + H2O = GDP + phosphate + H(+). In terms of biological role, required for accurate and efficient protein synthesis under certain stress conditions. May act as a fidelity factor of the translation reaction, by catalyzing a one-codon backward translocation of tRNAs on improperly translocated ribosomes. Back-translocation proceeds from a post-translocation (POST) complex to a pre-translocation (PRE) complex, thus giving elongation factor G a second chance to translocate the tRNAs correctly. Binds to ribosomes in a GTP-dependent manner. This is Elongation factor 4 from Francisella tularensis subsp. novicida (strain U112).